The following is a 363-amino-acid chain: 3-dehydroquinate synthase (363 aa).

NAD(+) is bound by residues 134-135, Lys147, and Lys156; that span reads TT. Glu189, His254, and His271 together coordinate Zn(2+).

The protein belongs to the sugar phosphate cyclases superfamily. Dehydroquinate synthase family. Requires Co(2+) as cofactor. Zn(2+) serves as cofactor. NAD(+) is required as a cofactor.

It localises to the cytoplasm. The enzyme catalyses 7-phospho-2-dehydro-3-deoxy-D-arabino-heptonate = 3-dehydroquinate + phosphate. It functions in the pathway metabolic intermediate biosynthesis; chorismate biosynthesis; chorismate from D-erythrose 4-phosphate and phosphoenolpyruvate: step 2/7. Catalyzes the conversion of 3-deoxy-D-arabino-heptulosonate 7-phosphate (DAHP) to dehydroquinate (DHQ). This Prochlorococcus marinus (strain MIT 9312) protein is 3-dehydroquinate synthase.